Consider the following 466-residue polypeptide: Putative multidrug resistance protein MdtD (466 aa).

The next 14 helical transmembrane spans lie at leucine 11–alanine 31, serine 48–alanine 68, isoleucine 71–cysteine 91, valine 105–isoleucine 125, phenylalanine 137–valine 157, tryptophan 164–methionine 184, phenylalanine 194–aspartate 214, serine 218–leucine 238, phenylalanine 262–methionine 282, phenylalanine 286–valine 306, valine 328–alanine 347, tryptophan 351–phenylalanine 370, leucine 403–glycine 423, and methionine 429–phenylalanine 449.

This sequence belongs to the major facilitator superfamily. TCR/Tet family.

It localises to the cell inner membrane. In Pectobacterium carotovorum subsp. carotovorum (strain PC1), this protein is Putative multidrug resistance protein MdtD.